The chain runs to 529 residues: Bifunctional purine biosynthesis protein PurH (529 aa).

Positions 1–148 (MQQRRPVRRA…KNHKDVAIVV (148 aa)) constitute an MGS-like domain.

This sequence belongs to the PurH family.

It catalyses the reaction (6R)-10-formyltetrahydrofolate + 5-amino-1-(5-phospho-beta-D-ribosyl)imidazole-4-carboxamide = 5-formamido-1-(5-phospho-D-ribosyl)imidazole-4-carboxamide + (6S)-5,6,7,8-tetrahydrofolate. The enzyme catalyses IMP + H2O = 5-formamido-1-(5-phospho-D-ribosyl)imidazole-4-carboxamide. It participates in purine metabolism; IMP biosynthesis via de novo pathway; 5-formamido-1-(5-phospho-D-ribosyl)imidazole-4-carboxamide from 5-amino-1-(5-phospho-D-ribosyl)imidazole-4-carboxamide (10-formyl THF route): step 1/1. Its pathway is purine metabolism; IMP biosynthesis via de novo pathway; IMP from 5-formamido-1-(5-phospho-D-ribosyl)imidazole-4-carboxamide: step 1/1. This is Bifunctional purine biosynthesis protein PurH from Salmonella newport (strain SL254).